Here is a 276-residue protein sequence, read N- to C-terminus: Putative translation initiation factor eIF-2B subunit 2-like (276 aa).

Belongs to the eIF-2B alpha/beta/delta subunits family. Complex of two different subunits.

Its function is as follows. Catalyzes the exchange of initiation factor 2-bound GDP for GTP. This Pyrococcus abyssi (strain GE5 / Orsay) protein is Putative translation initiation factor eIF-2B subunit 2-like.